The chain runs to 302 residues: UDP-N-acetylenolpyruvoylglucosamine reductase (302 aa).

The FAD-binding PCMH-type domain maps to 27–192 (KVGGAVDYLA…LSAKFALRPG (166 aa)). The active site involves R171. S221 serves as the catalytic Proton donor. Residue E291 is part of the active site.

This sequence belongs to the MurB family. FAD serves as cofactor.

The protein localises to the cytoplasm. It catalyses the reaction UDP-N-acetyl-alpha-D-muramate + NADP(+) = UDP-N-acetyl-3-O-(1-carboxyvinyl)-alpha-D-glucosamine + NADPH + H(+). It participates in cell wall biogenesis; peptidoglycan biosynthesis. Cell wall formation. This is UDP-N-acetylenolpyruvoylglucosamine reductase from Streptococcus suis (strain 98HAH33).